Here is a 487-residue protein sequence, read N- to C-terminus: Cytochrome P450 2C4 (487 aa).

A heme-binding site is contributed by cysteine 432.

This sequence belongs to the cytochrome P450 family. It depends on heme as a cofactor.

It is found in the endoplasmic reticulum membrane. It localises to the microsome membrane. The enzyme catalyses an organic molecule + reduced [NADPH--hemoprotein reductase] + O2 = an alcohol + oxidized [NADPH--hemoprotein reductase] + H2O + H(+). Functionally, cytochromes P450 are a group of heme-thiolate monooxygenases. In liver microsomes, this enzyme is involved in an NADPH-dependent electron transport pathway. It oxidizes a variety of structurally unrelated compounds, including steroids, fatty acids, and xenobiotics. The sequence is that of Cytochrome P450 2C4 (CYP2C4) from Oryctolagus cuniculus (Rabbit).